The primary structure comprises 55 residues: Large ribosomal subunit protein bL33 (55 aa).

This sequence belongs to the bacterial ribosomal protein bL33 family.

This chain is Large ribosomal subunit protein bL33, found in Xanthomonas axonopodis pv. citri (strain 306).